A 380-amino-acid polypeptide reads, in one-letter code: Probable protein phosphatase 2C 2 (380 aa).

In terms of domain architecture, PPM-type phosphatase spans 69-339 (RSGSFADIGP…DNLTVIVICF (271 aa)). Residues aspartate 113, glycine 114, aspartate 287, and aspartate 330 each coordinate Mn(2+).

This sequence belongs to the PP2C family. Requires Mg(2+) as cofactor. Mn(2+) serves as cofactor.

It catalyses the reaction O-phospho-L-seryl-[protein] + H2O = L-seryl-[protein] + phosphate. The catalysed reaction is O-phospho-L-threonyl-[protein] + H2O = L-threonyl-[protein] + phosphate. The sequence is that of Probable protein phosphatase 2C 2 from Oryza sativa subsp. japonica (Rice).